A 668-amino-acid polypeptide reads, in one-letter code: MTLYDENNLHIIKDNLRYLKLLSKQYPSISSASSEIINLQAILNLPKGTEHFISDVHGEYESFTHMLKNASGVIKRKIDDVFGTSLRECDKKNLATLIYYPEQKLDLIKKSEKNLEDWYKITLYRLIRLCQIVSSKYTRSKVRKSLPSDFAYIIEELLNEQGDRVDKQEYYNSIIETIIDIDRASEFIIAISNVIQRLVVDKLHIIGDIYDRGPGAEIIIEALSKHHSIDIQWGNHDIVWMGAAAGCEACIANVIRISLRYANLSTLEDGYGINLLPLATFAMDFYKEDNCENFKPRTIDKNLNETDIKLLSKMHKAISIIQFKLEGKIIKRRPEFKMGERLLLDKINIKEGTLNLNEKIYKLIDTNFPTLDKENPYELNERERDLVEKLTNSFINSEKLQRHIKFLYSNGNLYLKYNSNLLYHGCIPLNEDGSLKEVTLCKETLKGKSLLDKLDRLAREAYFFKKDPESKLYGMDMMWYLWCGSNSPLFGKKKMTTFERYFLDDKNTHKEQKNPYYKYRNDEKMCTMIFEEFELDADNSHIINGHIPVKTKEGENPIKANGKLLVIDGGFCKAYQPQTGIAGYTLIYNSYGLLLTSHEPFSSIHKAIVEGNDILSSTTILEHVSSRKRVLDTDSGEEIKKQIHDLEMLLVAYRKGLIKEENEANIRF.

It belongs to the FBPase class 3 family. Requires Mn(2+) as cofactor.

The enzyme catalyses beta-D-fructose 1,6-bisphosphate + H2O = beta-D-fructose 6-phosphate + phosphate. The protein operates within carbohydrate biosynthesis; gluconeogenesis. This chain is Fructose-1,6-bisphosphatase class 3, found in Clostridium botulinum (strain ATCC 19397 / Type A).